Here is a 1009-residue protein sequence, read N- to C-terminus: Chitin synthase 2 (1009 aa).

Polar residues-rich tracts occupy residues 1 to 12 (MSYNNPNNSNSH) and 34 to 62 (EFLN…LNFQ). Disordered stretches follow at residues 1–62 (MSYN…LNFQ) and 175–234 (DESQ…EVRS). The span at 192–202 (EGEEEEEEGET) shows a compositional bias: acidic residues. The next 7 helical transmembrane spans lie at 647–667 (WLNG…KVWT), 682–702 (FFYQ…YFLV), 722–742 (ILSV…FVLS), 757–777 (IVIF…FMAV), 804–823 (LVVA…FLYF), 930–950 (VLVW…TGGF), and 967–987 (AAVF…FRFI).

This sequence belongs to the chitin synthase family.

It is found in the cell membrane. It catalyses the reaction [(1-&gt;4)-N-acetyl-beta-D-glucosaminyl](n) + UDP-N-acetyl-alpha-D-glucosamine = [(1-&gt;4)-N-acetyl-beta-D-glucosaminyl](n+1) + UDP + H(+). Polymerizes chitin, a structural polymer of the cell wall and septum, by transferring the sugar moiety of UDP-GlcNAc to the non-reducing end of the growing chitin polymer. This chain is Chitin synthase 2 (CHS2), found in Candida albicans (Yeast).